We begin with the raw amino-acid sequence, 249 residues long: Ribosomal RNA small subunit methyltransferase J (249 aa).

Residues 99-100 (RD), 115-116 (ER), 151-152 (SS), and Asp-169 each bind S-adenosyl-L-methionine.

Belongs to the methyltransferase superfamily. RsmJ family.

It is found in the cytoplasm. It catalyses the reaction guanosine(1516) in 16S rRNA + S-adenosyl-L-methionine = N(2)-methylguanosine(1516) in 16S rRNA + S-adenosyl-L-homocysteine + H(+). Specifically methylates the guanosine in position 1516 of 16S rRNA. The protein is Ribosomal RNA small subunit methyltransferase J of Shewanella oneidensis (strain ATCC 700550 / JCM 31522 / CIP 106686 / LMG 19005 / NCIMB 14063 / MR-1).